The following is a 120-amino-acid chain: Ribosome-binding factor A (120 aa).

This sequence belongs to the RbfA family. As to quaternary structure, monomer. Binds 30S ribosomal subunits, but not 50S ribosomal subunits or 70S ribosomes.

The protein resides in the cytoplasm. Its function is as follows. One of several proteins that assist in the late maturation steps of the functional core of the 30S ribosomal subunit. Associates with free 30S ribosomal subunits (but not with 30S subunits that are part of 70S ribosomes or polysomes). Required for efficient processing of 16S rRNA. May interact with the 5'-terminal helix region of 16S rRNA. The chain is Ribosome-binding factor A from Clostridium botulinum (strain Loch Maree / Type A3).